Reading from the N-terminus, the 679-residue chain is Leucine-rich repeat, immunoglobulin-like domain and transmembrane domain-containing protein 3 (679 aa).

An N-terminal signal peptide occupies residues 1–19 (MHLFACLCIVLSFLEGVGC). The Lumenal segment spans residues 20–582 (LCPSQCTCDY…RVEGDDSQWS (563 aa)). 5 LRR repeats span residues 56 to 79 (PVDTVKLRIEKTVIRRISAEAFYY), 80 to 103 (LVELQYLWVTYNSVASIDPSSFYN), 104 to 128 (LKQLHELRLDGNSLAAFPWASLLDM), 129 to 151 (PLLRTLDLHNNKITSVPNEALRY), and 152 to 175 (LKNLAYLDLSSNRLTTLPPDFLES). An LRRCT domain is found at 201-253 (NPWFCDCHISKMIELSKVVDPAIVLLDPLMTCSEPERLTGILFQRAELEHCLK). In terms of domain architecture, Ig-like spans 254-344 (PSVMTSATKI…GMSEAVVTVT (91 aa)). Residues C275 and C328 are joined by a disulfide bond. N-linked (GlcNAc...) asparagine glycosylation is present at N296. Positions 351–375 (TPIPPDTSERTGDHPEWDVQPGSGR) are disordered. The segment covering 357-367 (TSERTGDHPEW) has biased composition (basic and acidic residues). One can recognise a Fibronectin type-III domain in the interval 486–574 (AIENLRVVSE…QCITFSTERV (89 aa)). A helical transmembrane segment spans residues 583-603 (LLLVVTSTACVVILPLICFLL). Residues 604-679 (YKVCKLQCKS…SEGSRPEYYC (76 aa)) lie on the Cytoplasmic side of the membrane.

Glycosylated. As to expression, detected in the outer plexiform layer (OPL) of the retina where it localizes to ON-bipolar cells (at protein level).

Its subcellular location is the cell projection. It is found in the dendrite. It localises to the perikaryon. The protein resides in the endoplasmic reticulum membrane. In terms of biological role, plays a role in the synapse formation and synaptic transmission between cone photoreceptor cells and retinal bipolar cells. Required for normal transmission of a light-evoked stimulus from the cone photoreceptor cells to the ON-bipolar cells and ON-ganglion cells in the inner retina. Required in retinal ON-bipolar cells for normal localization of the cation channel TRPM1 at dendrite tips. Seems to play a specific role in synaptic contacts made by ON-bipolar cells with cone photoreceptor pedicles. May also have a role in cone synapse formation. Might facilitate FGFR1 exit from the endoplasmic reticulum to the Golgi. Could be a regulator of the FGFRs. The chain is Leucine-rich repeat, immunoglobulin-like domain and transmembrane domain-containing protein 3 (LRIT3) from Homo sapiens (Human).